The chain runs to 397 residues: Enoyl-[acyl-carrier-protein] reductase [NADH] (397 aa).

Residues 48-53, 74-75, 111-112, and 139-140 contribute to the NAD(+) site; these read GASTGY, FE, DA, and VA. Tyr-225 contacts substrate. Catalysis depends on Tyr-235, which acts as the Proton donor. NAD(+) is bound by residues Lys-244 and 273-275; that span reads VVT.

The protein belongs to the TER reductase family. Monomer.

The enzyme catalyses a 2,3-saturated acyl-[ACP] + NAD(+) = a (2E)-enoyl-[ACP] + NADH + H(+). It participates in lipid metabolism; fatty acid biosynthesis. In terms of biological role, involved in the final reduction of the elongation cycle of fatty acid synthesis (FAS II). Catalyzes the reduction of a carbon-carbon double bond in an enoyl moiety that is covalently linked to an acyl carrier protein (ACP). This Burkholderia mallei (strain NCTC 10247) protein is Enoyl-[acyl-carrier-protein] reductase [NADH].